The following is a 122-amino-acid chain: Large ribosomal subunit protein bL12 (122 aa).

Belongs to the bacterial ribosomal protein bL12 family. As to quaternary structure, homodimer. Part of the ribosomal stalk of the 50S ribosomal subunit. Forms a multimeric L10(L12)X complex, where L10 forms an elongated spine to which 2 to 4 L12 dimers bind in a sequential fashion. Binds GTP-bound translation factors.

Its function is as follows. Forms part of the ribosomal stalk which helps the ribosome interact with GTP-bound translation factors. Is thus essential for accurate translation. The sequence is that of Large ribosomal subunit protein bL12 from Borrelia hermsii (strain HS1 / DAH).